Consider the following 77-residue polypeptide: Serine protease inhibitor 1 (77 aa).

The N-terminal stretch at 1-17 (MMFTPLIVLTLLVLATA) is a signal peptide. Cystine bridges form between cysteine 21-cysteine 53, cysteine 30-cysteine 48, cysteine 33-cysteine 44, cysteine 37-cysteine 74, and cysteine 55-cysteine 68. The 54-residue stretch at 21–74 (CGPNEQWSDCPGCELQCGESDKPCPAMCGDPKCYCSPDQYRRIPDGRCIRKIQC) folds into the TIL domain.

The protein localises to the secreted. Defends the organism against the host's proteinases. The protein is Serine protease inhibitor 1 of Anisakis simplex (Herring worm).